A 399-amino-acid chain; its full sequence is Phosphoglycerate kinase (399 aa).

Residues 21–23, arginine 36, 59–62, arginine 120, and arginine 158 each bind substrate; these read DFN and HLGR. Residues lysine 209, glycine 297, glutamate 328, and 355 to 358 contribute to the ATP site; that span reads GGDS.

Belongs to the phosphoglycerate kinase family. In terms of assembly, monomer.

Its subcellular location is the cytoplasm. It catalyses the reaction (2R)-3-phosphoglycerate + ATP = (2R)-3-phospho-glyceroyl phosphate + ADP. The protein operates within carbohydrate degradation; glycolysis; pyruvate from D-glyceraldehyde 3-phosphate: step 2/5. The protein is Phosphoglycerate kinase of Streptococcus thermophilus (strain CNRZ 1066).